The sequence spans 352 residues: N-acetyl-gamma-glutamyl-phosphate reductase 1 (352 aa).

This sequence belongs to the NAGSA dehydrogenase family. Type 1 subfamily.

It localises to the cytoplasm. The enzyme catalyses N-acetyl-L-glutamate 5-semialdehyde + phosphate + NADP(+) = N-acetyl-L-glutamyl 5-phosphate + NADPH + H(+). Its pathway is amino-acid biosynthesis; L-arginine biosynthesis; N(2)-acetyl-L-ornithine from L-glutamate: step 3/4. Its function is as follows. Catalyzes the NADPH-dependent reduction of N-acetyl-5-glutamyl phosphate to yield N-acetyl-L-glutamate 5-semialdehyde. This Nostoc sp. (strain PCC 7120 / SAG 25.82 / UTEX 2576) protein is N-acetyl-gamma-glutamyl-phosphate reductase 1.